The primary structure comprises 252 residues: Chitooligosaccharide deacetylase (252 aa).

Residues His-61 and His-125 each contribute to the Mg(2+) site.

The protein belongs to the YdjC deacetylase family. ChbG subfamily. As to quaternary structure, homodimer. The cofactor is Mg(2+).

The protein resides in the cytoplasm. It catalyses the reaction N,N'-diacetylchitobiose + H2O = N-acetyl-beta-D-glucosaminyl-(1-&gt;4)-D-glucosamine + acetate. It carries out the reaction diacetylchitobiose-6'-phosphate + H2O = N'-monoacetylchitobiose-6'-phosphate + acetate. Its pathway is glycan degradation; chitin degradation. Involved in the degradation of chitin. ChbG is essential for growth on the acetylated chitooligosaccharides chitobiose and chitotriose but is dispensable for growth on cellobiose and chitosan dimer, the deacetylated form of chitobiose. Deacetylation of chitobiose-6-P and chitotriose-6-P is necessary for both the activation of the chb promoter by the regulatory protein ChbR and the hydrolysis of phosphorylated beta-glucosides by the phospho-beta-glucosidase ChbF. Catalyzes the removal of only one acetyl group from chitobiose-6-P to yield monoacetylchitobiose-6-P, the inducer of ChbR and the substrate of ChbF. This is Chitooligosaccharide deacetylase from Shigella flexneri serotype 5b (strain 8401).